The following is a 395-amino-acid chain: MVQEFNVLRCFSCQTFQVQQVKKAKKWTCKVCGEKQSLIKEFGRGAAADCRRHVQKLNALRGEQHQLNTQQLLAQGDEENENEDVYEVLDPKSEQEEAHVSRWSKYTDQTTEGPNEEKDDEDEDENVYTERPQFRIQGTRKRKKMSSLEPFGGNCDNYEESRAGYSQFRKQAYLPLQLEKRSSSSWNKGSVSKYSNCQRPDDVVPSARTKLPSSRQTVGHYPTACSSSTNTMENSIGNKQQIKSSYRPPTADVNKHLPIQSESPSVSSHQKFGESTIENKDSKWNKFLTIVPTQDKEEYYYESQNGKKTLIPYFTKADTVVDFEERRCPADEKDSGILNRQKVVGGNASCPTTRLPTKSVGFENAVCKPVLVKAPYSSLSLNPLFCTDEDFDDTS.

The span at 90–100 shows a compositional bias: basic and acidic residues; it reads DPKSEQEEAHV. 2 disordered regions span residues 90-155 and 180-275; these read DPKS…GGNC and KRSS…FGES. Polar residues predominate over residues 104-113; it reads SKYTDQTTEG. The span at 117 to 127 shows a compositional bias: acidic residues; sequence EKDDEDEDENV. The Nuclear localization signal (NLS) signature appears at 142 to 145; that stretch reads RKKM. The segment covering 183–195 has biased composition (low complexity); sequence SSSWNKGSVSKYS. Composition is skewed to polar residues over residues 224-244 and 260-270; these read ACSS…QIKS and QSESPSVSSHQ.

It belongs to the MRNIP family.

Its subcellular location is the nucleus. The protein resides in the nucleoplasm. Plays a role in the cellular response to DNA damage and the maintenance of genome stability through its association with the MRN damage-sensing complex. Promotes chromatin loading and activity of the MRN complex to facilitate subsequent ATM-mediated DNA damage response signaling and DNA repair. This Danio rerio (Zebrafish) protein is MRN complex-interacting protein.